Consider the following 390-residue polypeptide: Homeobox protein Meis1 (390 aa).

The 85-residue stretch at 108 to 192 (GGDVCSSESF…IDLVIDDREG (85 aa)) folds into the MEIS N-terminal domain. Residues 190–202 (REGGSKSDSEDIT) are compositionally biased toward basic and acidic residues. The disordered stretch occupies residues 190-279 (REGGSKSDSE…KKRHKKRGIF (90 aa)). The span at 203-213 (RSANLTDQPSW) shows a compositional bias: polar residues. Positions 272-334 (RHKKRGIFPK…NARRRIVQPM (63 aa)) form a DNA-binding region, homeobox; TALE-type. The interaction with DNA stretch occupies residues 299 to 329 (YPSEEQKKQLAQDTGLTILQVNNWFINARRR). The interval 335 to 390 (IDQSNRAVSQGTPYNPDGQPMGGFVMDGQQHMGIRAPGPMSGMGMNMGMEGQWHYM) is required for transcriptional activation.

Belongs to the TALE/MEIS homeobox family. In terms of assembly, interacts with the N-terminal region of PBX1 to form a heterodimer which binds DNA including a cAMP-responsive sequence in CYP17. Also forms heterodimers with PBX2. Forms heterotrimers with PBX1 or PBX2 and a number of HOX proteins including HOXA9, HOXD4 and HOXD9 where it acts as a non-DNA-binding partner. Also forms heterotrimers with PBX1 and HOX proteins including HOXD9 and HOXD10 where PBX1 is the non-DNA-binding partner. Heterodimer with DLX3. Heterodimer with HOXB13. In terms of tissue distribution, expressed at low level in normal immunohepatopoietic tissues, including the fetal liver. Expressed in a subset of myeloid leukemia cell lines, with the highest expression seen in those with a megakaryocytic-erythroid phenotype. Also expressed at high levels in the cerebellum.

It localises to the nucleus. Functionally, acts as a transcriptional regulator of PAX6. Acts as a transcriptional activator of PF4 in complex with PBX1 or PBX2. Required for hematopoiesis, megakaryocyte lineage development and vascular patterning. May function as a cofactor for HOXA7 and HOXA9 in the induction of myeloid leukemias. The chain is Homeobox protein Meis1 (MEIS1) from Homo sapiens (Human).